The chain runs to 701 residues: Elongation factor G (701 aa).

The 277-residue stretch at 11 to 287 folds into the tr-type G domain; it reads TKVRNIGIMA…AVIDYLPSPL (277 aa). GTP contacts are provided by residues 20–27, 84–88, and 138–141; these read AHIDAGKT, DTPGH, and NKMD.

Belongs to the TRAFAC class translation factor GTPase superfamily. Classic translation factor GTPase family. EF-G/EF-2 subfamily.

The protein localises to the cytoplasm. Catalyzes the GTP-dependent ribosomal translocation step during translation elongation. During this step, the ribosome changes from the pre-translocational (PRE) to the post-translocational (POST) state as the newly formed A-site-bound peptidyl-tRNA and P-site-bound deacylated tRNA move to the P and E sites, respectively. Catalyzes the coordinated movement of the two tRNA molecules, the mRNA and conformational changes in the ribosome. This is Elongation factor G from Mycobacterium ulcerans (strain Agy99).